Consider the following 233-residue polypeptide: Sugar fermentation stimulation protein homolog (233 aa).

This sequence belongs to the SfsA family.

The chain is Sugar fermentation stimulation protein homolog from Teredinibacter turnerae (strain ATCC 39867 / T7901).